The following is a 34-amino-acid chain: MEVNILGLMAVALFILIPTSFLLILYVKTASSSD.

Residues 5 to 25 (ILGLMAVALFILIPTSFLLIL) traverse the membrane as a helical segment.

This sequence belongs to the PsbM family. In terms of assembly, PSII is composed of 1 copy each of membrane proteins PsbA, PsbB, PsbC, PsbD, PsbE, PsbF, PsbH, PsbI, PsbJ, PsbK, PsbL, PsbM, PsbT, PsbX, PsbY, PsbZ, Psb30/Ycf12, at least 3 peripheral proteins of the oxygen-evolving complex and a large number of cofactors. It forms dimeric complexes.

It localises to the plastid. Its subcellular location is the chloroplast thylakoid membrane. One of the components of the core complex of photosystem II (PSII). PSII is a light-driven water:plastoquinone oxidoreductase that uses light energy to abstract electrons from H(2)O, generating O(2) and a proton gradient subsequently used for ATP formation. It consists of a core antenna complex that captures photons, and an electron transfer chain that converts photonic excitation into a charge separation. This subunit is found at the monomer-monomer interface. The sequence is that of Photosystem II reaction center protein M from Tupiella akineta (Green alga).